The following is a 354-amino-acid chain: Protein ECM8 (354 aa).

Functionally, may be involved in cell wall organization and biogenesis. The sequence is that of Protein ECM8 (ECM8) from Saccharomyces cerevisiae (strain ATCC 204508 / S288c) (Baker's yeast).